The primary structure comprises 210 residues: ATP-dependent Clp protease proteolytic subunit (210 aa).

S107 (nucleophile) is an active-site residue. H132 is an active-site residue.

It belongs to the peptidase S14 family. As to quaternary structure, fourteen ClpP subunits assemble into 2 heptameric rings which stack back to back to give a disk-like structure with a central cavity, resembling the structure of eukaryotic proteasomes.

It is found in the cytoplasm. It carries out the reaction Hydrolysis of proteins to small peptides in the presence of ATP and magnesium. alpha-casein is the usual test substrate. In the absence of ATP, only oligopeptides shorter than five residues are hydrolyzed (such as succinyl-Leu-Tyr-|-NHMec, and Leu-Tyr-Leu-|-Tyr-Trp, in which cleavage of the -Tyr-|-Leu- and -Tyr-|-Trp bonds also occurs).. Functionally, cleaves peptides in various proteins in a process that requires ATP hydrolysis. Has a chymotrypsin-like activity. Plays a major role in the degradation of misfolded proteins. The sequence is that of ATP-dependent Clp protease proteolytic subunit from Azorhizobium caulinodans (strain ATCC 43989 / DSM 5975 / JCM 20966 / LMG 6465 / NBRC 14845 / NCIMB 13405 / ORS 571).